Consider the following 339-residue polypeptide: UDP-galactose transporter homolog 1 (339 aa).

The next 9 membrane-spanning stretches (helical) occupy residues 5–25, 43–63, 91–111, 138–158, 171–191, 208–228, 246–268, 273–295, and 301–321; these read ILKH…WGLL, VPYI…LIYI, AISA…TYML, LVVL…HKPS, SSLI…LTNA, HLMF…MVLV, ISRY…FYTL, SLVL…IIVY, and LWQW…SMGK.

It belongs to the nucleotide-sugar transporter family. SLC35B subfamily.

The protein resides in the endoplasmic reticulum membrane. Functionally, may be involved in specific transport of UDP-Gal from the cytosol to the Golgi lumen. Involved in the maintenance of optimal conditions for the folding of secretory pathway proteins in the endoplasmic reticulum. The protein is UDP-galactose transporter homolog 1 (HUT1) of Kluyveromyces lactis (strain ATCC 8585 / CBS 2359 / DSM 70799 / NBRC 1267 / NRRL Y-1140 / WM37) (Yeast).